Here is an 80-residue protein sequence, read N- to C-terminus: MLSKEKIARINELANKAKVEELSAKEKVEQQELRKEYLEAFRGGMRHHIEGMKVVDQEGTDVTPEKLKKIQREKGLHNRK.

The interval 60 to 80 (TDVTPEKLKKIQREKGLHNRK) is disordered. Over residues 63-80 (TPEKLKKIQREKGLHNRK) the composition is skewed to basic and acidic residues.

It belongs to the UPF0291 family.

Its subcellular location is the cytoplasm. The chain is UPF0291 protein EF_1580 from Enterococcus faecalis (strain ATCC 700802 / V583).